The sequence spans 76 residues: uncharacterized protein (76 aa).

A helical transmembrane segment spans residues 12-32 (LPCGAFFISVLFFFNAVCIVS).

Its subcellular location is the cell membrane. This is an uncharacterized protein from Escherichia coli O157:H7.